The following is a 537-amino-acid chain: CWF19-like protein 1 (537 aa).

A disordered region spans residues K297–P323.

This sequence belongs to the CWF19 family.

The polypeptide is CWF19-like protein 1 (Cwf19l1) (Mus musculus (Mouse)).